The primary structure comprises 122 residues: Basic phospholipase A2 PL-X (122 aa).

7 cysteine pairs are disulfide-bonded: Cys-26–Cys-115, Cys-28–Cys-44, Cys-43–Cys-95, Cys-49–Cys-122, Cys-50–Cys-88, Cys-57–Cys-81, and Cys-75–Cys-86. The Ca(2+) site is built by Tyr-27, Gly-29, and Gly-31. Residue His-47 is part of the active site. Asp-48 contacts Ca(2+). The active site involves Asp-89.

It belongs to the phospholipase A2 family. Group II subfamily. D49 sub-subfamily. The cofactor is Ca(2+). As to expression, expressed by the venom gland.

Its subcellular location is the secreted. The catalysed reaction is a 1,2-diacyl-sn-glycero-3-phosphocholine + H2O = a 1-acyl-sn-glycero-3-phosphocholine + a fatty acid + H(+). PLA2 catalyzes the calcium-dependent hydrolysis of the 2-acyl groups in 3-sn-phosphoglycerides. The sequence is that of Basic phospholipase A2 PL-X from Protobothrops flavoviridis (Habu).